Reading from the N-terminus, the 86-residue chain is Triple QxxK/R motif-containing protein (86 aa).

The chain crosses the membrane as a helical span at residues Val51 to Leu71.

Belongs to the TRIQK family. As to expression, expressed in heart, brain, spleen, lung, liver, skeletal muscle, kidney and testis.

Its subcellular location is the endoplasmic reticulum membrane. Its function is as follows. May play a role in cell growth and maintenance of cell morphology. This chain is Triple QxxK/R motif-containing protein (Triqk), found in Mus musculus (Mouse).